We begin with the raw amino-acid sequence, 124 residues long: Prefoldin subunit beta (124 aa).

It belongs to the prefoldin subunit beta family. As to quaternary structure, heterohexamer of two alpha and four beta subunits.

The protein resides in the cytoplasm. Functionally, molecular chaperone capable of stabilizing a range of proteins. Seems to fulfill an ATP-independent, HSP70-like function in archaeal de novo protein folding. This is Prefoldin subunit beta (pfdB) from Thermoplasma acidophilum (strain ATCC 25905 / DSM 1728 / JCM 9062 / NBRC 15155 / AMRC-C165).